The chain runs to 252 residues: Hydroxyacylglutathione hydrolase (252 aa).

Positions 54, 56, 58, 59, 111, 128, and 166 each coordinate Zn(2+).

This sequence belongs to the metallo-beta-lactamase superfamily. Glyoxalase II family. As to quaternary structure, monomer. Requires Zn(2+) as cofactor.

The enzyme catalyses an S-(2-hydroxyacyl)glutathione + H2O = a 2-hydroxy carboxylate + glutathione + H(+). It functions in the pathway secondary metabolite metabolism; methylglyoxal degradation; (R)-lactate from methylglyoxal: step 2/2. Thiolesterase that catalyzes the hydrolysis of S-D-lactoyl-glutathione to form glutathione and D-lactic acid. This Vibrio vulnificus (strain CMCP6) protein is Hydroxyacylglutathione hydrolase.